A 133-amino-acid chain; its full sequence is Mitochondrial import inner membrane translocase subunit TIM17-3 (133 aa).

Helical transmembrane passes span 15-35 (IVNA…VYHF), 63-83 (GGTF…LVRI), 90-105 (WNSI…VLSI), and 115-128 (SAVM…VLNP).

It belongs to the Tim17/Tim22/Tim23 family. In terms of assembly, component of the TIM17:23 complex at least composed of TIM23, TIM17 and TIM50. The complex interacts with the TIM44 component of the PAM complex. In terms of tissue distribution, expressed in cotyledons, roots, flowers and leaves.

The protein resides in the mitochondrion inner membrane. Its function is as follows. Essential component of the TIM17:23 complex, a complex that mediates the translocation of transit peptide-containing proteins across the mitochondrial inner membrane. Links the inner and outer membranes. This Arabidopsis thaliana (Mouse-ear cress) protein is Mitochondrial import inner membrane translocase subunit TIM17-3 (TIM17-3).